Here is a 149-residue protein sequence, read N- to C-terminus: Nucleoside diphosphate kinase (149 aa).

The ATP site is built by K9, F57, R85, T91, R102, and N112. Residue H115 is the Pros-phosphohistidine intermediate of the active site.

The protein belongs to the NDK family. As to quaternary structure, homotetramer. Requires Mg(2+) as cofactor.

The protein localises to the cytoplasm. It carries out the reaction a 2'-deoxyribonucleoside 5'-diphosphate + ATP = a 2'-deoxyribonucleoside 5'-triphosphate + ADP. It catalyses the reaction a ribonucleoside 5'-diphosphate + ATP = a ribonucleoside 5'-triphosphate + ADP. Major role in the synthesis of nucleoside triphosphates other than ATP. The ATP gamma phosphate is transferred to the NDP beta phosphate via a ping-pong mechanism, using a phosphorylated active-site intermediate. This is Nucleoside diphosphate kinase from Herpetosiphon aurantiacus (strain ATCC 23779 / DSM 785 / 114-95).